A 303-amino-acid polypeptide reads, in one-letter code: MASWAKGRSYLAPGLLQGQVAIVTGGATGIGKAIVKELLELGSNVVIASRKLERLKSAAGELQANLPPTKQARVIPIQCNIRNEEEVNNLVKSTLDIFGKINFLVNNGGGQFLSLAEHISSKGWHAVLETNLTGTFYMCKAVYSSWMKEHGGSIVNIIVSIKTGLPLAVHSGAARAGVYNLTKSLALEWACSGVRINCVAPGVIYSQTAVENYGSYGQSFFEESFQKIPAKRIGVPEEVSSVVCFLLSPAASFITGQSVDVDGGRSLYTHSYEIPDHDNWPKGAGDLSVVKRMKETFKEKAKL.

Position 23-47 (23-47 (VTGGATGIGKAIVKELLELGSNVVI)) interacts with NADP(+). At Lys-32 the chain carries N6-succinyllysine. Position 49 is a phosphoserine (Ser-49). Tyr-179 serves as the catalytic Proton acceptor. Tyr-179 bears the Phosphotyrosine mark. Residues 301 to 303 (AKL) carry the Microbody targeting signal motif.

The protein belongs to the short-chain dehydrogenases/reductases (SDR) family. Interacts with PEX5, probably required to target it into peroxisomes.

The protein localises to the peroxisome. It catalyses the reaction a (2E)-enoyl-CoA + NADPH + H(+) = a 2,3-saturated acyl-CoA + NADP(+). The enzyme catalyses (2E)-hexenoyl-CoA + NADPH + H(+) = hexanoyl-CoA + NADP(+). The catalysed reaction is (2E)-octenoyl-CoA + NADPH + H(+) = octanoyl-CoA + NADP(+). It carries out the reaction (2E)-decenoyl-CoA + NADPH + H(+) = decanoyl-CoA + NADP(+). It catalyses the reaction (2E)-dodecenoyl-CoA + NADPH + H(+) = dodecanoyl-CoA + NADP(+). The enzyme catalyses (2E)-tetradecenoyl-CoA + NADPH + H(+) = tetradecanoyl-CoA + NADP(+). It functions in the pathway lipid metabolism; fatty acid biosynthesis. Its function is as follows. Participates in chain elongation of fatty acids. Catalyzes the reduction of trans-2-enoyl-CoAs of varying chain lengths from 6:1 to 16:1, having maximum activity with 10:1 CoA. Has no 2,4-dienoyl-CoA reductase activity. This chain is Peroxisomal trans-2-enoyl-CoA reductase (PECR), found in Pongo abelii (Sumatran orangutan).